The chain runs to 84 residues: Small, acid-soluble spore protein gamma-type (84 aa).

Composition is skewed to polar residues over residues 1–25 and 34–44; these read MANS…SAAG and ASETNAQQVRK. The interval 1 to 84 is disordered; that stretch reads MANSNNFSKT…SAEQNKQQNS (84 aa). 2 repeats span residues 21 to 47 and 48 to 74; these read QSAA…KQNQ and QSAG…QQNQ. Low complexity-rich tracts occupy residues 45-57 and 71-84; these read QNQQ…GQFG and QQNQ…QQNS.

This sequence belongs to the gamma-type SASP family.

In terms of biological role, SASP are proteins degraded in the first minutes of spore germination and provide amino acids for both new protein synthesis and metabolism. These proteins may be involved in dormant spore's high resistance to UV light. This chain is Small, acid-soluble spore protein gamma-type (sspE), found in Bacillus subtilis (strain 168).